We begin with the raw amino-acid sequence, 422 residues long: MSMNLKETIILKLDEVRTASRTLVTLTDSTINEVLLDLAGRIAPNAAAILEANRSDLERMERSSPMYDRLLLNEKRLEGIAADIRNVASLPSPLDMTLEERTLENGLRLRKASVPMGVIGIIYEARPNVTFDVFALSLKSGNATVLKGGSDADASNRAIVELIHSVLSDHNLSPDTLYLLPSEREAATVMMGAVGKIDMIIPRGSQALINHVRNTAKVPVIETGAGIVHTYFDKSGELEMGKEIVLNAKTRRPSVCNALDTLIIHSERLGDLSELCRPLAEHQVIIFADERAYLSLLASYPEQLLQHAEPEHFGTEFLSLKLSVKTVDTLDDALEHIAAYSSQHSEAVITEDPAVKAEFFKRVDAAVVYANTSTAFTDGAQFGLGAEIGISTQKLHARGPMALRELTTYKWMIEGDGQTRPA.

The protein belongs to the gamma-glutamyl phosphate reductase family.

Its subcellular location is the cytoplasm. It catalyses the reaction L-glutamate 5-semialdehyde + phosphate + NADP(+) = L-glutamyl 5-phosphate + NADPH + H(+). The protein operates within amino-acid biosynthesis; L-proline biosynthesis; L-glutamate 5-semialdehyde from L-glutamate: step 2/2. Catalyzes the NADPH-dependent reduction of L-glutamate 5-phosphate into L-glutamate 5-semialdehyde and phosphate. The product spontaneously undergoes cyclization to form 1-pyrroline-5-carboxylate. This Chlorobium phaeovibrioides (strain DSM 265 / 1930) (Prosthecochloris vibrioformis (strain DSM 265)) protein is Gamma-glutamyl phosphate reductase.